The chain runs to 278 residues: Protoheme IX farnesyltransferase (278 aa).

9 helical membrane passes run 12–32 (VIWL…GTVD), 36–56 (LAAL…FNHY), 72–92 (PLPA…ALSA), 105–124 (LPGV…YTVW), 130–150 (WLNI…GYAL), 157–177 (LPAV…IWAL), 204–224 (AIIS…YLVF), 228–248 (LPGL…SALA), and 257–277 (MWRM…ALVF).

This sequence belongs to the UbiA prenyltransferase family. Protoheme IX farnesyltransferase subfamily.

It localises to the cell membrane. It catalyses the reaction heme b + (2E,6E)-farnesyl diphosphate + H2O = Fe(II)-heme o + diphosphate. It participates in porphyrin-containing compound metabolism; heme O biosynthesis; heme O from protoheme: step 1/1. Converts heme B (protoheme IX) to heme O by substitution of the vinyl group on carbon 2 of heme B porphyrin ring with a hydroxyethyl farnesyl side group. The chain is Protoheme IX farnesyltransferase from Pyrobaculum neutrophilum (strain DSM 2338 / JCM 9278 / NBRC 100436 / V24Sta) (Thermoproteus neutrophilus).